The sequence spans 1404 residues: DNA-directed RNA polymerase subunit beta' (1404 aa).

The Zn(2+) site is built by C72, C74, C87, and C90. 3 residues coordinate Mg(2+): D462, D464, and D466. C816, C890, C897, and C900 together coordinate Zn(2+).

The protein belongs to the RNA polymerase beta' chain family. As to quaternary structure, the RNAP catalytic core consists of 2 alpha, 1 beta, 1 beta' and 1 omega subunit. When a sigma factor is associated with the core the holoenzyme is formed, which can initiate transcription. Requires Mg(2+) as cofactor. It depends on Zn(2+) as a cofactor.

It catalyses the reaction RNA(n) + a ribonucleoside 5'-triphosphate = RNA(n+1) + diphosphate. Functionally, DNA-dependent RNA polymerase catalyzes the transcription of DNA into RNA using the four ribonucleoside triphosphates as substrates. The protein is DNA-directed RNA polymerase subunit beta' of Azoarcus sp. (strain BH72).